Here is a 377-residue protein sequence, read N- to C-terminus: EPS I polysaccharide export outer membrane protein EpsA (377 aa).

A signal peptide spans 1–23; the sequence is MFVSIPSIRKTVMSLCAVPLMAA. A lipid anchor (N-palmitoyl cysteine) is attached at Cys24. A lipid anchor (S-diacylglycerol cysteine) is attached at Cys24.

The protein belongs to the BexD/CtrA/VexA family.

It is found in the cell outer membrane. Its function is as follows. Probably involved in polymerization and/or export of exopolysaccharide EPS I which functions as a virulence factor. The protein is EPS I polysaccharide export outer membrane protein EpsA (epsA) of Ralstonia solanacearum (Pseudomonas solanacearum).